We begin with the raw amino-acid sequence, 143 residues long: FAD synthase (143 aa).

Residues 11–12 (TF), 16–19 (HPGH), and D94 each bind ATP.

It belongs to the archaeal FAD synthase family. As to quaternary structure, homodimer. It depends on a divalent metal cation as a cofactor.

It carries out the reaction FMN + ATP + H(+) = FAD + diphosphate. Its pathway is cofactor biosynthesis; FAD biosynthesis; FAD from FMN: step 1/1. In terms of biological role, catalyzes the transfer of the AMP portion of ATP to flavin mononucleotide (FMN) to produce flavin adenine dinucleotide (FAD) coenzyme. The chain is FAD synthase from Halomicrobium mukohataei (strain ATCC 700874 / DSM 12286 / JCM 9738 / NCIMB 13541) (Haloarcula mukohataei).